The chain runs to 247 residues: Large ribosomal subunit protein uL24m (247 aa).

The region spanning 84–117 is the KOW domain; the sequence is FFRGDRIEVLVGKDKGKQGIVTQVIPERNWVIVE.

Belongs to the universal ribosomal protein uL24 family. In terms of assembly, component of the mitochondrial ribosome large subunit (39S) which comprises a 16S rRNA and about 50 distinct proteins.

It localises to the mitochondrion. The chain is Large ribosomal subunit protein uL24m (mRpL24) from Drosophila pseudoobscura pseudoobscura (Fruit fly).